Here is a 436-residue protein sequence, read N- to C-terminus: GTPase Der (436 aa).

2 EngA-type G domains span residues 4–167 (PIVA…DEET) and 176–351 (IRLS…ENHK). GTP is bound by residues 10–17 (GRPNVGKS), 57–61 (DTGGI), 119–122 (NKVD), 182–189 (GRPNVGKS), 229–233 (DTAGM), and 294–297 (NKWD). The KH-like domain occupies 352–436 (KRVQSSTLNE…PIHIIPRRRN (85 aa)).

The protein belongs to the TRAFAC class TrmE-Era-EngA-EngB-Septin-like GTPase superfamily. EngA (Der) GTPase family. As to quaternary structure, associates with the 50S ribosomal subunit.

Its function is as follows. GTPase that plays an essential role in the late steps of ribosome biogenesis. The sequence is that of GTPase Der from Staphylococcus haemolyticus (strain JCSC1435).